A 181-amino-acid chain; its full sequence is Large ribosomal subunit protein uL5 (181 aa).

It belongs to the universal ribosomal protein uL5 family. In terms of assembly, part of the 50S ribosomal subunit; part of the 5S rRNA/L5/L18/L25 subcomplex. Contacts the 5S rRNA and the P site tRNA. Forms a bridge to the 30S subunit in the 70S ribosome.

Its function is as follows. This is one of the proteins that bind and probably mediate the attachment of the 5S RNA into the large ribosomal subunit, where it forms part of the central protuberance. In the 70S ribosome it contacts protein S13 of the 30S subunit (bridge B1b), connecting the 2 subunits; this bridge is implicated in subunit movement. Contacts the P site tRNA; the 5S rRNA and some of its associated proteins might help stabilize positioning of ribosome-bound tRNAs. In Helicobacter pylori (strain J99 / ATCC 700824) (Campylobacter pylori J99), this protein is Large ribosomal subunit protein uL5.